Here is a 373-residue protein sequence, read N- to C-terminus: Probable tRNA sulfurtransferase (373 aa).

One can recognise a THUMP domain in the interval 54–158; sequence NKNIEELSKV…NDVAYFYHKI (105 aa). ATP is bound by residues 176-177, 201-202, Lys-256, Gly-278, and Gln-287; these read LF and NF.

Belongs to the ThiI family.

It localises to the cytoplasm. It catalyses the reaction [ThiI sulfur-carrier protein]-S-sulfanyl-L-cysteine + a uridine in tRNA + 2 reduced [2Fe-2S]-[ferredoxin] + ATP + H(+) = [ThiI sulfur-carrier protein]-L-cysteine + a 4-thiouridine in tRNA + 2 oxidized [2Fe-2S]-[ferredoxin] + AMP + diphosphate. It carries out the reaction [ThiS sulfur-carrier protein]-C-terminal Gly-Gly-AMP + S-sulfanyl-L-cysteinyl-[cysteine desulfurase] + AH2 = [ThiS sulfur-carrier protein]-C-terminal-Gly-aminoethanethioate + L-cysteinyl-[cysteine desulfurase] + A + AMP + 2 H(+). Its pathway is cofactor biosynthesis; thiamine diphosphate biosynthesis. Catalyzes the ATP-dependent transfer of a sulfur to tRNA to produce 4-thiouridine in position 8 of tRNAs, which functions as a near-UV photosensor. Also catalyzes the transfer of sulfur to the sulfur carrier protein ThiS, forming ThiS-thiocarboxylate. This is a step in the synthesis of thiazole, in the thiamine biosynthesis pathway. The sulfur is donated as persulfide by IscS. The protein is Probable tRNA sulfurtransferase of Saccharolobus islandicus (strain M.16.27) (Sulfolobus islandicus).